Reading from the N-terminus, the 225-residue chain is Cytochrome c oxidase subunit 2 (225 aa).

The Mitochondrial intermembrane portion of the chain corresponds to 1–25 (MSTWMMFMFQESNSFYADNLVSFHN). The chain crosses the membrane as a helical span at residues 26-47 (LVMMIIIMISTLTIYIIFDLFM). Over 48–62 (NKFSNLFLLKNHNIE) the chain is Mitochondrial matrix. Residues 63-82 (IIWTIVPIVILLIICFPSLK) traverse the membrane as a helical segment. The Mitochondrial intermembrane portion of the chain corresponds to 83–225 (ILYLIDEIIN…FFLNWINKQN (143 aa)). Cu cation contacts are provided by histidine 159, cysteine 194, glutamate 196, cysteine 198, histidine 202, and methionine 205. Glutamate 196 contacts Mg(2+).

Belongs to the cytochrome c oxidase subunit 2 family. Component of the cytochrome c oxidase (complex IV, CIV), a multisubunit enzyme composed of a catalytic core of 3 subunits and several supernumerary subunits. The complex exists as a monomer or a dimer and forms supercomplexes (SCs) in the inner mitochondrial membrane with ubiquinol-cytochrome c oxidoreductase (cytochrome b-c1 complex, complex III, CIII). Cu cation is required as a cofactor.

It localises to the mitochondrion inner membrane. The catalysed reaction is 4 Fe(II)-[cytochrome c] + O2 + 8 H(+)(in) = 4 Fe(III)-[cytochrome c] + 2 H2O + 4 H(+)(out). In terms of biological role, component of the cytochrome c oxidase, the last enzyme in the mitochondrial electron transport chain which drives oxidative phosphorylation. The respiratory chain contains 3 multisubunit complexes succinate dehydrogenase (complex II, CII), ubiquinol-cytochrome c oxidoreductase (cytochrome b-c1 complex, complex III, CIII) and cytochrome c oxidase (complex IV, CIV), that cooperate to transfer electrons derived from NADH and succinate to molecular oxygen, creating an electrochemical gradient over the inner membrane that drives transmembrane transport and the ATP synthase. Cytochrome c oxidase is the component of the respiratory chain that catalyzes the reduction of oxygen to water. Electrons originating from reduced cytochrome c in the intermembrane space (IMS) are transferred via the dinuclear copper A center (CU(A)) of subunit 2 and heme A of subunit 1 to the active site in subunit 1, a binuclear center (BNC) formed by heme A3 and copper B (CU(B)). The BNC reduces molecular oxygen to 2 water molecules using 4 electrons from cytochrome c in the IMS and 4 protons from the mitochondrial matrix. In Apis koschevnikovi (Koschevnikov's honey bee), this protein is Cytochrome c oxidase subunit 2 (COII).